Reading from the N-terminus, the 283-residue chain is Phosphate import ATP-binding protein PstB (283 aa).

Positions 1-20 (MAQTLAQTKQISQSHTFDVS) are enriched in polar residues. The tract at residues 1 to 33 (MAQTLAQTKQISQSHTFDVSQSHHKTPNDTNSH) is disordered. Positions 37-278 (YSTQNLDLWY…PSNKKTEDYI (242 aa)) constitute an ABC transporter domain. Position 69-76 (69-76 (GPSGCGKS)) interacts with ATP.

It belongs to the ABC transporter superfamily. Phosphate importer (TC 3.A.1.7) family. As to quaternary structure, the complex is composed of two ATP-binding proteins (PstB), two transmembrane proteins (PstC and PstA) and a solute-binding protein (PstS).

The protein localises to the cell membrane. It carries out the reaction phosphate(out) + ATP + H2O = ADP + 2 phosphate(in) + H(+). Its function is as follows. Part of the ABC transporter complex PstSACB involved in phosphate import. Responsible for energy coupling to the transport system. In Staphylococcus aureus (strain bovine RF122 / ET3-1), this protein is Phosphate import ATP-binding protein PstB.